A 984-amino-acid chain; its full sequence is UPF0592 protein YDL073W (984 aa).

The interval 675–712 (KNHKIMDGYEGGQENEDNDEDSEDSGSHKNKRKEGNSS) is disordered. Over residues 687-698 (QENEDNDEDSED) the composition is skewed to acidic residues.

It belongs to the UPF0592 family.

The chain is UPF0592 protein YDL073W from Saccharomyces cerevisiae (strain ATCC 204508 / S288c) (Baker's yeast).